Consider the following 62-residue polypeptide: Large ribosomal subunit protein uL30 (62 aa).

This sequence belongs to the universal ribosomal protein uL30 family. In terms of assembly, part of the 50S ribosomal subunit.

This chain is Large ribosomal subunit protein uL30, found in Nitrosospira multiformis (strain ATCC 25196 / NCIMB 11849 / C 71).